The chain runs to 499 residues: Nucleoside transporter 2 (499 aa).

At 1 to 30 (MTGQSAAVEGSNSALPWYRMGFHTLAEFNT) the chain is on the cytoplasmic side. Transmembrane regions (helical) follow at residues 31–51 (YVTF…VTSA), 112–132 (LFLG…VPAA), 133–153 (TIPT…MGGL), 179–199 (WGLT…QVSM), and 212–232 (IYFG…VLLR). A compositionally biased stretch (basic and acidic residues) spans 255 to 267 (VEPEESQDSKEPA). The tract at residues 255–276 (VEPEESQDSKEPATGDVAEAPK) is disordered. Asn-326 carries N-linked (GlcNAc...) asparagine glycosylation. A run of 5 helical transmembrane segments spans residues 350–370 (LCAF…FFLV), 378–398 (MTII…LLMI), 406–426 (KLVI…VLCV), 428–448 (GFIP…LTNG), and 475–495 (MLAG…SLAI).

The protein belongs to the SLC29A/ENT transporter (TC 2.A.57) family.

It localises to the cell membrane. The protein resides in the cell projection. It is found in the cilium. Its subcellular location is the flagellum. It catalyses the reaction inosine(in) + H(+)(in) = inosine(out) + H(+)(out). The enzyme catalyses guanosine(in) + H(+)(in) = guanosine(out) + H(+)(out). The catalysed reaction is xanthosine(in) + H(+)(in) = xanthosine(out) + H(+)(out). In terms of biological role, high affinity nucleoside:H(+) symporter; transports inosine and guanosine. Can transport xanthosine. In Leishmania donovani, this protein is Nucleoside transporter 2.